Reading from the N-terminus, the 142-residue chain is DNA-directed RNA polymerase subunit omega (142 aa).

Residues 104 to 142 are disordered; the sequence is FNTDADVDQESTDIQDDEVENEMSNQDSEDIDDEVDNEE. Acidic residues predominate over residues 108–142; the sequence is ADVDQESTDIQDDEVENEMSNQDSEDIDDEVDNEE.

Belongs to the RNA polymerase subunit omega family. In terms of assembly, the RNAP catalytic core consists of 2 alpha, 1 beta, 1 beta' and 1 omega subunit. When a sigma factor is associated with the core the holoenzyme is formed, which can initiate transcription.

The catalysed reaction is RNA(n) + a ribonucleoside 5'-triphosphate = RNA(n+1) + diphosphate. Functionally, promotes RNA polymerase assembly. Latches the N- and C-terminal regions of the beta' subunit thereby facilitating its interaction with the beta and alpha subunits. This is DNA-directed RNA polymerase subunit omega from Wolbachia sp. subsp. Brugia malayi (strain TRS).